Consider the following 87-residue polypeptide: Large ribosomal subunit protein bL31B (87 aa).

Belongs to the bacterial ribosomal protein bL31 family. Type B subfamily. In terms of assembly, part of the 50S ribosomal subunit.

The protein is Large ribosomal subunit protein bL31B of Klebsiella pneumoniae (strain 342).